Reading from the N-terminus, the 172-residue chain is Large ribosomal subunit protein uL10 (172 aa).

This sequence belongs to the universal ribosomal protein uL10 family. As to quaternary structure, part of the ribosomal stalk of the 50S ribosomal subunit. The N-terminus interacts with L11 and the large rRNA to form the base of the stalk. The C-terminus forms an elongated spine to which L12 dimers bind in a sequential fashion forming a multimeric L10(L12)X complex.

Forms part of the ribosomal stalk, playing a central role in the interaction of the ribosome with GTP-bound translation factors. This Bartonella henselae (strain ATCC 49882 / DSM 28221 / CCUG 30454 / Houston 1) (Rochalimaea henselae) protein is Large ribosomal subunit protein uL10.